A 648-amino-acid polypeptide reads, in one-letter code: Nucleoside triphosphatase I (648 aa).

The Helicase ATP-binding domain occupies 48 to 213; sequence FIGLKNLNSM…NNLIGLLRPN (166 aa). 61 to 68 provides a ligand contact to ATP; it reads WDTGTGKT. The DEXH box motif lies at 151 to 154; it reads DEVH. The Helicase C-terminal domain occupies 379–542; the sequence is YIEACRIILN…KINVVFDLLK (164 aa). The interval 468-534 is binding to the cap-specific mRNA (nucleoside-2'-O-)-methyltransferase; that stretch reads DIIILDMPWN…DIIKNKQGKI (67 aa).

Belongs to the helicase family. NPH I subfamily. Monomer. Interacts (via C-terminus) with RAP94 (via N-terminus). Interacts with the cap-specific mRNA (nucleoside-2'-O-)-methyltransferase.

Its subcellular location is the virion. It catalyses the reaction a ribonucleoside 5'-triphosphate + H2O = a ribonucleoside 5'-diphosphate + phosphate + H(+). In terms of biological role, DNA-dependent ATPase required for providing the needed energy to achieve the termination of early transcripts. Acts in concert with the RAP94 subunit of the virion RNA polymerase and the capping enzyme/VTF to catalyze release of UUUUUNU-containing nascent RNA from the elongation complex. NPH-I must bind ssDNA in order to exhibit ATPase activity. In Choristoneura fumiferana (Spruce budworm moth), this protein is Nucleoside triphosphatase I (NPH1).